The following is a 534-amino-acid chain: GMP synthase [glutamine-hydrolyzing] (534 aa).

Residues 20 to 210 (MLIILDFGSQ…VYHICDCEPT (191 aa)) form the Glutamine amidotransferase type-1 domain. Cysteine 97 (nucleophile) is an active-site residue. Residues histidine 184 and glutamate 186 contribute to the active site. Positions 211-409 (WTTETFVEEA…LGLPEEIVKR (199 aa)) constitute a GMPS ATP-PPase domain. 238–244 (SGGVDSS) contacts ATP.

As to quaternary structure, homodimer.

It catalyses the reaction XMP + L-glutamine + ATP + H2O = GMP + L-glutamate + AMP + diphosphate + 2 H(+). The protein operates within purine metabolism; GMP biosynthesis; GMP from XMP (L-Gln route): step 1/1. Functionally, catalyzes the synthesis of GMP from XMP. This Synechococcus sp. (strain ATCC 27144 / PCC 6301 / SAUG 1402/1) (Anacystis nidulans) protein is GMP synthase [glutamine-hydrolyzing].